The chain runs to 689 residues: Solute carrier organic anion transporter family member 1B2 (689 aa).

The Cytoplasmic portion of the chain corresponds to 1 to 26 (MDQTQHPSKAAQPLRSEKTRHCDGFR). The helical transmembrane segment at 27 to 46 (IFLAALSFSYICKALGGVIM) threads the bilayer. Residues 47–65 (KSSITQIERRFDIPSSISG) lie on the Extracellular side of the membrane. The chain crosses the membrane as a helical span at residues 66-86 (LIDGGFEIGNLLVIVFVSYFG). The Cytoplasmic portion of the chain corresponds to 87–92 (SKLHRP). The helical transmembrane segment at 93–117 (KLIGTGCFIMGIGSILTALPHFFMG) threads the bilayer. The Extracellular segment spans residues 118–163 (YYRYATENDISSLHNSTLTCLVNQTTSLTGTSPEIMEKGCEKGSNS). Asparagine 132 and asparagine 140 each carry an N-linked (GlcNAc...) asparagine glycan. The helical transmembrane segment at 164–192 (YTWIYVLMGNMLRGIGETPIVPLGVSYID) threads the bilayer. Residues 193–211 (DFAKEGNSSMYLGTLHTIA) lie on the Cytoplasmic side of the membrane. Residues 212–232 (MIGPILGFIMSSVFAKLYVDV) form a helical membrane-spanning segment. The Extracellular segment spans residues 233–250 (GYVDLRSVRITPQDARWV). Residues 251 to 275 (GAWWLGFIVNGLLCIICSIPFFFLP) traverse the membrane as a helical segment. At 276–326 (KIPKRSQKERKNSASLHVLKTDEDKNPVTNPTTQEKQAPANLTGFLWSLRS) the chain is on the cytoplasmic side. Residues serine 288 and serine 290 each carry the phosphoserine modification. The helical transmembrane segment at 327 to 348 (ILTNEQYVIFLILTLLQISSFI) threads the bilayer. The Extracellular portion of the chain corresponds to 349–368 (GSFTYLFKFIEQQFGQTASQ). The helical transmembrane segment at 369–392 (ANFLLGVITIPTMASGMFLGGYLI) threads the bilayer. Topologically, residues 393–396 (KRLK) are cytoplasmic. A helical membrane pass occupies residues 397-420 (LTLLGITKFVFFTTTMAYVFYLSY). Residues 421–533 (FLLICENKAF…DKCKTKYYFY (113 aa)) lie on the Extracellular side of the membrane. In terms of domain architecture, Kazal-like spans 448–505 (DVPLSYCNSDCICDKNQWEPVCGENGVTYISPCLAGCKSFRGDKKLMNIEFYDCSCVS). 3 disulfide bridges follow: cysteine 454–cysteine 484, cysteine 460–cysteine 480, and cysteine 469–cysteine 503. N-linked (GlcNAc...) asparagine glycosylation occurs at asparagine 513. The helical transmembrane segment at 534-556 (ITFQVIISFFTALGSTSLMLILI) threads the bilayer. Topologically, residues 557-565 (RSVQPELKS) are cytoplasmic. Residues 566–591 (LGMGFHSLVVRTLGGILAPVYYGALI) form a helical membrane-spanning segment. The Extracellular portion of the chain corresponds to 592-625 (DRTCMKWSVTSCGARGACRLYNSRLFGMIYVGLS). The chain crosses the membrane as a helical span at residues 626 to 643 (IALKTPILLLYVALIYVM). At 644-689 (KRKMKRNDNKILENGRKFTDEGNPEPVNNNGYSCVPSDEKNSETPL) the chain is on the cytoplasmic side. Residues 658–689 (GRKFTDEGNPEPVNNNGYSCVPSDEKNSETPL) form a disordered region. Threonine 662 bears the Phosphothreonine mark. Residue serine 680 is modified to Phosphoserine. A compositionally biased stretch (basic and acidic residues) spans 680 to 689 (SDEKNSETPL).

This sequence belongs to the organo anion transporter (TC 2.A.60) family. In terms of tissue distribution, liver specific.

The protein localises to the cell membrane. It catalyses the reaction estrone 3-sulfate(out) = estrone 3-sulfate(in). The catalysed reaction is taurocholate(out) = taurocholate(in). The enzyme catalyses prostaglandin E2(out) = prostaglandin E2(in). It carries out the reaction L-thyroxine(out) = L-thyroxine(in). Its function is as follows. Mediates the Na(+)-independent uptake of organic anions such as taurochlate, bromosulfophthalein and steroid conjugates (estrone 3-sulfate, 17-beta-glucuronosyl estradiol, dehydroepiandrosterone sulfate). Also transports prostaglandin E2 and L-thyroxine (T4). Shows a pH-sensitive substrate specificity which may be ascribed to the protonation state of the binding site and leads to a stimulation of substrate transport in an acidic microenvironment. Hydrogencarbonate/HCO3(-) acts as the probable counteranion that exchanges for organic anions. This is Solute carrier organic anion transporter family member 1B2 (Slco1b2) from Mus musculus (Mouse).